Here is a 247-residue protein sequence, read N- to C-terminus: ATP synthase subunit a, chloroplastic (247 aa).

Transmembrane regions (helical) follow at residues 38 to 58, 95 to 115, 134 to 154, 199 to 219, and 220 to 240; these read QVLI…IIAV, VPFI…GALL, INTT…AGLT, LVVV…VMFL, and GLFT…AYIG.

Belongs to the ATPase A chain family. As to quaternary structure, F-type ATPases have 2 components, CF(1) - the catalytic core - and CF(0) - the membrane proton channel. CF(1) has five subunits: alpha(3), beta(3), gamma(1), delta(1), epsilon(1). CF(0) has four main subunits: a, b, b' and c.

Its subcellular location is the plastid. It is found in the chloroplast thylakoid membrane. In terms of biological role, key component of the proton channel; it plays a direct role in the translocation of protons across the membrane. The chain is ATP synthase subunit a, chloroplastic from Ranunculus macranthus (Large buttercup).